The primary structure comprises 578 residues: Membrane protein insertase YidC (578 aa).

A helical transmembrane segment spans residues 3-23 (IQRSILIVALAVVSYLLVLQW). Positions 34–72 (AASASMNTTQGLPDTPSASGTSSDVPTAQSSAAGSEAAD) are disordered. A compositionally biased stretch (polar residues) spans 37-66 (ASMNTTQGLPDTPSASGTSSDVPTAQSSAA). Helical transmembrane passes span 361-381 (LELT…FWLL), 387-407 (LIGN…LAFF), 457-477 (LGGC…YWVL), 500-520 (PFFI…MLNP), and 535-555 (PIIF…YWVV).

It belongs to the OXA1/ALB3/YidC family. Type 1 subfamily. In terms of assembly, interacts with the Sec translocase complex via SecD. Specifically interacts with transmembrane segments of nascent integral membrane proteins during membrane integration.

It is found in the cell inner membrane. Functionally, required for the insertion and/or proper folding and/or complex formation of integral membrane proteins into the membrane. Involved in integration of membrane proteins that insert both dependently and independently of the Sec translocase complex, as well as at least some lipoproteins. Aids folding of multispanning membrane proteins. This is Membrane protein insertase YidC from Pseudomonas aeruginosa (strain ATCC 15692 / DSM 22644 / CIP 104116 / JCM 14847 / LMG 12228 / 1C / PRS 101 / PAO1).